A 328-amino-acid chain; its full sequence is MQNSTTEFLKPRQIDVNTFSATRAKVSMQPFERGFGHTLGNALRRILLSSMNGFAPTEVAIAGVLHEYSTVDGIQEDVVDILLNIKGIVFKLHGRSQVQLVLKKSGSGVVSAGDIELPHDVEILNPGHVICHLADNGQIEMEIKVEQGRGYQSVSGRQVVRDENRQIGAIQLDASFSPISRVSFEVEPARVEQRTDLDKLVLDIETDGSIDPEEAVRSAARILIDQMSIFADLQGTPVEEVEEKAPPIDPVLLRPVDDLELTVRSANCLKAEDIYYIGDLIQRTETELLKTPNLGRKSLNEIKEVLASKGLTLGSKLEAWPPVGLEKP.

An alpha N-terminal domain (alpha-NTD) region spans residues 1–234 (MQNSTTEFLK…DQMSIFADLQ (234 aa)). Residues 248–328 (IDPVLLRPVD…AWPPVGLEKP (81 aa)) are alpha C-terminal domain (alpha-CTD).

The protein belongs to the RNA polymerase alpha chain family. Homodimer. The RNAP catalytic core consists of 2 alpha, 1 beta, 1 beta' and 1 omega subunit. When a sigma factor is associated with the core the holoenzyme is formed, which can initiate transcription.

It carries out the reaction RNA(n) + a ribonucleoside 5'-triphosphate = RNA(n+1) + diphosphate. In terms of biological role, DNA-dependent RNA polymerase catalyzes the transcription of DNA into RNA using the four ribonucleoside triphosphates as substrates. The sequence is that of DNA-directed RNA polymerase subunit alpha from Neisseria meningitidis serogroup A / serotype 4A (strain DSM 15465 / Z2491).